We begin with the raw amino-acid sequence, 407 residues long: MQYDHLLVRYGELTLKGTNRKMFVNQLKDNVKRALIPLSGYHVKGKRDRMYIELSPEADINEIIQRLSKVYGIKSISPVIKIDKNEEKINQSAIQLSHDFEKGSTFKVDVKRVDKSFRLDTYELQRQVGGAILKENNNITVNVKNPDYEIKIEVRMDAIYIYEKVIAGAGGLPVGTGGKTLLMLSGGIDSPVAGIEVMKRGVTVEAIHFHSPPFTSEKAKDKVIELTRILAERVGPIKLHLVPFTEIQKQINKVVHPRYTMTSTRRMMMRISDKVVHQINANAIVNGENLGQVASQTLKSMYAINHVTATPVLRPLLTLDKEDIIKKAKELGTFETSIQPYEDCCTIFTPKNPVTEPDFDKVIKYESVFNFDEMIENAVENIETLTIDQNYKSAKEQSTDSLIKDLF.

In terms of domain architecture, THUMP spans 61 to 165 (NEIIQRLSKV…MDAIYIYEKV (105 aa)). Residues 183–184 (ML), 208–209 (HF), Arg-265, Gly-287, and Gln-296 contribute to the ATP site.

This sequence belongs to the ThiI family.

It is found in the cytoplasm. The enzyme catalyses [ThiI sulfur-carrier protein]-S-sulfanyl-L-cysteine + a uridine in tRNA + 2 reduced [2Fe-2S]-[ferredoxin] + ATP + H(+) = [ThiI sulfur-carrier protein]-L-cysteine + a 4-thiouridine in tRNA + 2 oxidized [2Fe-2S]-[ferredoxin] + AMP + diphosphate. It catalyses the reaction [ThiS sulfur-carrier protein]-C-terminal Gly-Gly-AMP + S-sulfanyl-L-cysteinyl-[cysteine desulfurase] + AH2 = [ThiS sulfur-carrier protein]-C-terminal-Gly-aminoethanethioate + L-cysteinyl-[cysteine desulfurase] + A + AMP + 2 H(+). It functions in the pathway cofactor biosynthesis; thiamine diphosphate biosynthesis. Functionally, catalyzes the ATP-dependent transfer of a sulfur to tRNA to produce 4-thiouridine in position 8 of tRNAs, which functions as a near-UV photosensor. Also catalyzes the transfer of sulfur to the sulfur carrier protein ThiS, forming ThiS-thiocarboxylate. This is a step in the synthesis of thiazole, in the thiamine biosynthesis pathway. The sulfur is donated as persulfide by IscS. In Staphylococcus epidermidis (strain ATCC 35984 / DSM 28319 / BCRC 17069 / CCUG 31568 / BM 3577 / RP62A), this protein is Probable tRNA sulfurtransferase.